Reading from the N-terminus, the 1134-residue chain is Error-prone DNA polymerase (1134 aa).

The disordered stretch occupies residues 1 to 33 (MSYHNPPIPWRELEGRISGRPAPHGHQESHADQ).

This sequence belongs to the DNA polymerase type-C family. DnaE2 subfamily.

The protein localises to the cytoplasm. The catalysed reaction is DNA(n) + a 2'-deoxyribonucleoside 5'-triphosphate = DNA(n+1) + diphosphate. DNA polymerase involved in damage-induced mutagenesis and translesion synthesis (TLS). It is not the major replicative DNA polymerase. In Cutibacterium acnes (strain DSM 16379 / KPA171202) (Propionibacterium acnes), this protein is Error-prone DNA polymerase.